We begin with the raw amino-acid sequence, 323 residues long: Lipoyl synthase (323 aa).

Cys-65, Cys-70, Cys-76, Cys-91, Cys-95, Cys-98, and Ser-304 together coordinate [4Fe-4S] cluster. One can recognise a Radical SAM core domain in the interval 77-293; it reads FNNGTATFMI…KKEALSIGFT (217 aa).

This sequence belongs to the radical SAM superfamily. Lipoyl synthase family. Requires [4Fe-4S] cluster as cofactor.

The protein resides in the cytoplasm. It catalyses the reaction [[Fe-S] cluster scaffold protein carrying a second [4Fe-4S](2+) cluster] + N(6)-octanoyl-L-lysyl-[protein] + 2 oxidized [2Fe-2S]-[ferredoxin] + 2 S-adenosyl-L-methionine + 4 H(+) = [[Fe-S] cluster scaffold protein] + N(6)-[(R)-dihydrolipoyl]-L-lysyl-[protein] + 4 Fe(3+) + 2 hydrogen sulfide + 2 5'-deoxyadenosine + 2 L-methionine + 2 reduced [2Fe-2S]-[ferredoxin]. It participates in protein modification; protein lipoylation via endogenous pathway; protein N(6)-(lipoyl)lysine from octanoyl-[acyl-carrier-protein]: step 2/2. Its function is as follows. Catalyzes the radical-mediated insertion of two sulfur atoms into the C-6 and C-8 positions of the octanoyl moiety bound to the lipoyl domains of lipoate-dependent enzymes, thereby converting the octanoylated domains into lipoylated derivatives. This is Lipoyl synthase from Buchnera aphidicola subsp. Acyrthosiphon pisum (strain APS) (Acyrthosiphon pisum symbiotic bacterium).